The sequence spans 24 residues: Coenzyme PQQ synthesis protein A (24 aa).

Residues 16-20 constitute a cross-link (pyrroloquinoline quinone (Glu-Tyr)); the sequence is EITMY.

It belongs to the PqqA family.

It functions in the pathway cofactor biosynthesis; pyrroloquinoline quinone biosynthesis. Required for coenzyme pyrroloquinoline quinone (PQQ) biosynthesis. PQQ is probably formed by cross-linking a specific glutamate to a specific tyrosine residue and excising these residues from the peptide. The chain is Coenzyme PQQ synthesis protein A from Burkholderia cenocepacia (strain ATCC BAA-245 / DSM 16553 / LMG 16656 / NCTC 13227 / J2315 / CF5610) (Burkholderia cepacia (strain J2315)).